The following is a 368-amino-acid chain: 3-dehydroquinate synthase (368 aa).

NAD(+)-binding positions include 71 to 76 (DGESFK), 105 to 109 (GVIGD), 129 to 130 (TT), lysine 142, lysine 151, and 169 to 172 (TLRT). Residues glutamate 184, histidine 247, and histidine 264 each contribute to the Zn(2+) site.

The protein belongs to the sugar phosphate cyclases superfamily. Dehydroquinate synthase family. Requires Co(2+) as cofactor. The cofactor is Zn(2+). NAD(+) serves as cofactor.

Its subcellular location is the cytoplasm. The enzyme catalyses 7-phospho-2-dehydro-3-deoxy-D-arabino-heptonate = 3-dehydroquinate + phosphate. It participates in metabolic intermediate biosynthesis; chorismate biosynthesis; chorismate from D-erythrose 4-phosphate and phosphoenolpyruvate: step 2/7. Its function is as follows. Catalyzes the conversion of 3-deoxy-D-arabino-heptulosonate 7-phosphate (DAHP) to dehydroquinate (DHQ). The protein is 3-dehydroquinate synthase of Ralstonia pickettii (strain 12J).